We begin with the raw amino-acid sequence, 471 residues long: Cysteine--tRNA ligase (471 aa).

Cysteine 29 contributes to the Zn(2+) binding site. The 'HIGH' region signature appears at proline 31–asparagine 41. Residues cysteine 209, histidine 234, and glutamate 238 each contribute to the Zn(2+) site. Positions lysine 266–serine 270 match the 'KMSKS' region motif. An ATP-binding site is contributed by lysine 269.

This sequence belongs to the class-I aminoacyl-tRNA synthetase family. As to quaternary structure, monomer. It depends on Zn(2+) as a cofactor.

It is found in the cytoplasm. It carries out the reaction tRNA(Cys) + L-cysteine + ATP = L-cysteinyl-tRNA(Cys) + AMP + diphosphate. In Listeria monocytogenes serotype 4b (strain CLIP80459), this protein is Cysteine--tRNA ligase.